A 428-amino-acid chain; its full sequence is MQESLTLQPIARVDGTINLPGSKSVSNRALLLAALAKGTTTLTNLLDSDDVRHMLNALNALGVHYSLSDDRTRCEIQGQGGPFNTLVELELFLGNAGTAMRPLAAALCLGTNNVVLTGEPRMKERPIGHLVDALRQGGADVTYLEQENYPPLHLKGGFTGGNVTVDGSVSSQFLTALLMAAPLAPGNTAIDIKGELVSKPYIDITLHLMKTFGVEVENQNYQRFVIQGGQQYQSPGHYLVEGDASSASYFLAAAAIKGGTVKVTGIGRNSVQGDIRFADVLEKMGAHITWGDDFISCTRGELNAIDMDMNHIPDAAMTIATTALFAKGTTTLRNIYNWRVKETDRLAAMATELRKVGATVEEGHDFITVTPPAQLQFADIGTYNDHRMAMCFSLVALSDTPVTILDPKCTAKTFPNYFAQLARISHSA.

K23, S24, and R28 together coordinate 3-phosphoshikimate. Residue K23 coordinates phosphoenolpyruvate. The phosphoenolpyruvate site is built by G97 and R125. Positions 170, 171, 172, 198, 314, 337, and 341 each coordinate 3-phosphoshikimate. Q172 contributes to the phosphoenolpyruvate binding site. D314 acts as the Proton acceptor in catalysis. Residues R345, R387, and K412 each coordinate phosphoenolpyruvate.

This sequence belongs to the EPSP synthase family. As to quaternary structure, monomer.

It localises to the cytoplasm. It carries out the reaction 3-phosphoshikimate + phosphoenolpyruvate = 5-O-(1-carboxyvinyl)-3-phosphoshikimate + phosphate. It participates in metabolic intermediate biosynthesis; chorismate biosynthesis; chorismate from D-erythrose 4-phosphate and phosphoenolpyruvate: step 6/7. Its function is as follows. Catalyzes the transfer of the enolpyruvyl moiety of phosphoenolpyruvate (PEP) to the 5-hydroxyl of shikimate-3-phosphate (S3P) to produce enolpyruvyl shikimate-3-phosphate and inorganic phosphate. This Cronobacter sakazakii (strain ATCC BAA-894) (Enterobacter sakazakii) protein is 3-phosphoshikimate 1-carboxyvinyltransferase.